We begin with the raw amino-acid sequence, 1135 residues long: Large proline-rich protein bag6-A (1135 aa).

Residues 7–82 (MEVTVKTLDS…HLVERAPPQT (76 aa)) form the Ubiquitin-like domain. Disordered stretches follow at residues 76–114 (ERAP…RNGN), 194–238 (EQAA…SPSE), 350–407 (TGNG…PHPR), 498–522 (SFQF…VPGA), 552–612 (QGGS…QHLS), 661–698 (PVST…ESLP), 1075–1099 (KATG…EAQG), and 1116–1135 (NESY…RGDP). Residues 79-100 (PPQTQPSTGGPSTSSSTSPTSS) are compositionally biased toward low complexity. The segment covering 212–227 (RETLPQTTQNTDGQSN) has biased composition (polar residues). Over residues 228-237 (TTPTSHPSPS) the composition is skewed to low complexity. Over residues 367 to 387 (QPPSTNTSEPQRPNTENQPPS) the composition is skewed to polar residues. Low complexity-rich tracts occupy residues 555-600 (SSTS…SVPS) and 663-672 (STAPTQSASQ). The span at 673–692 (APPPSSPPPPPAHSSPPPAA) shows a compositional bias: pro residues. The segment covering 1087-1099 (CVRRELDNSEAQG) has biased composition (basic and acidic residues). Positions 1116–1129 (NESYSAQRFPNTQR) are enriched in polar residues.

In terms of assembly, component of the bag6/bat3 complex.

Its subcellular location is the cytoplasm. It localises to the cytosol. The protein resides in the nucleus. It is found in the secreted. The protein localises to the extracellular exosome. ATP-independent molecular chaperone preventing the aggregation of misfolded and hydrophobic patches-containing proteins. Functions as part of a cytosolic protein quality control complex, the bag6/bat3 complex, which maintains these client proteins in a soluble state and participates in their proper delivery to the endoplasmic reticulum or alternatively can promote their sorting to the proteasome where they undergo degradation. The bag6/bat3 complex is involved in the post-translational delivery of tail-anchored/type II transmembrane proteins to the endoplasmic reticulum membrane. Similarly, the bag6/bat3 complex also functions as a sorting platform for proteins of the secretory pathway that are mislocalized to the cytosol either delivering them to the proteasome for degradation or to the endoplasmic reticulum. The bag6/bat3 complex also plays a role in the endoplasmic reticulum-associated degradation (ERAD), a quality control mechanism that eliminates unwanted proteins of the endoplasmic reticulum through their retrotranslocation to the cytosol and their targeting to the proteasome. It maintains these retrotranslocated proteins in an unfolded yet soluble state condition in the cytosol to ensure their proper delivery to the proteasome. Also required for selective ubiquitin-mediated degradation of defective nascent chain polypeptides by the proteasome. Also involved in endoplasmic reticulum stress-induced pre-emptive quality control, a mechanism that selectively attenuates the translocation of newly synthesized proteins into the endoplasmic reticulum and reroutes them to the cytosol for proteasomal degradation. May ensure the proper degradation of these proteins and thereby protects the endoplasmic reticulum from protein overload upon stress. By stabilizing a large spectrum of proteins, may indirectly affect different biological processes including apoptosis. By controlling the steady-state expression of the IGF1R receptor, indirectly regulates the insulin-like growth factor receptor signaling pathway. Its function is as follows. When nuclear, may also act as a component of some chromatin regulator complex. In Xenopus laevis (African clawed frog), this protein is Large proline-rich protein bag6-A.